Reading from the N-terminus, the 345-residue chain is Erythronate-4-phosphate dehydrogenase (345 aa).

Serine 45 serves as a coordination point for substrate. Positions 146 and 174 each coordinate NAD(+). Arginine 207 is an active-site residue. Aspartate 227 lines the NAD(+) pocket. Glutamate 232 is a catalytic residue. The active-site Proton donor is histidine 249. Glycine 252 is a binding site for NAD(+).

Belongs to the D-isomer specific 2-hydroxyacid dehydrogenase family. PdxB subfamily. In terms of assembly, homodimer.

The protein localises to the cytoplasm. It carries out the reaction 4-phospho-D-erythronate + NAD(+) = (R)-3-hydroxy-2-oxo-4-phosphooxybutanoate + NADH + H(+). It functions in the pathway cofactor biosynthesis; pyridoxine 5'-phosphate biosynthesis; pyridoxine 5'-phosphate from D-erythrose 4-phosphate: step 2/5. Its function is as follows. Catalyzes the oxidation of erythronate-4-phosphate to 3-hydroxy-2-oxo-4-phosphonooxybutanoate. The protein is Erythronate-4-phosphate dehydrogenase of Ruthia magnifica subsp. Calyptogena magnifica.